The primary structure comprises 1503 residues: MNESASQEELRPAQENRKEDKERKWNLTEVKELHETLQSVPDVPVKEDTNSVVEKAMDEIKSQELNLEGQRKISPGSIKDSKTEASGNIAIRKSAKVIFALDETELKSKPEHTWKKNLFERMEARAQAMQQKIIDKENLKKELEKKAEKKLPRDNLAKEWFNTDSMTLNNTAYLLDKLLPTLVPGVENMLTQVEKKKVLTEADTPSKFDPINYLGEYLIRNNPNYIKDPGMSGYQRLMKEVTEDLKIYVPDTICNRVSKMKENVKQNRKQRESIDKIIVKVANTRKQALQEQFDEWILDPKGMIPKSVIQNVLQEFFQNPDFKLGSHCKQLDITDSTEPRLNKMEFTEYISSHIKDLKSEMFEELLKHLCHSADEFREVIKADMRRQMFAELFLHCDHGKVGFLDRQRTLALLELFYDHSSQMLRSLLRNPRQWPFIEFEEINLTELWGDMDNQKHIYEGFDKVLLEMNTLLSANHASKTQSKLLESPDQPKLNEQRTSTPSPNPPEQQRGVTAEQGPQRISIEEQQQGKKPTAEQELYIESVIEPGTHTESTLEQGSSRRLLTEQETHRESTTEQGQHKGSIEGQGPRRVSVSEQGSSRESVAEQGSRRESIAEQDRHKGSVAEQGSRRMSAAEQGSLRESVIEEPYQKSEQGPYGEIISEEQEDIGSTSQSRKDSILKSTKYGEPITSEYIEVPLQEKRSWEQTYEEEIFLSSELQEEVPTLSRKDHFPETTKKEVQKDKPCEPKSQKIEGKSWSGEFFTCNWKMKYVTFEDEEQANLIYGNSRFTDLHSIIRNIQSCKEVKGRTAFNGVSFNLLQFVQLLETFVGEDAPLSVSETLTSFFKEGYVETEQEKMNALEQFSQNAFQVRQRLLLEAIFQKWDSDGSGFLDLKEVDELLYTYKEGMEKESMKKAKLHIQFPKPHPGHEVRLSSKQFQNYIELVVSELRGNEDQVLESVVEFLMNALERSHIESLRNSARRKWLHQIQCAAETSGVSLEPVYSETFKALMQDAEAHGNKKISAHISLLEENLLLPEKGNVLLRNVACTLDDAQFVLNRVLYRDMKGISFTVVDEGKPIHVPQVQYHGNIFFWNQSRNKHDYNGSFLALPLQDAYMRIFGVLAVDTLRDPHEINIFLPHEIRFYQGVANVFSTAYHYVHSREHILHIVITGIGWLYDVTSSITSITTYFVEPSPAQDSDYVLRNMMVTGQLGLTEIHKNPPTIHRKSCIFRDFLFKCTDSSEVVLASACGETHIVVPLRERTGEALGVLDFNIGQNRMLLCQEYKDLQKMMKVVQVACYEILGEFSGEIKKKYILEIENVREVQRAGILFFRIMLLELQESIQLLNSMEFVSLLLYDHTLVTEPNSPQDSKSMELEANVKLVRDILKAVILFFHPELEFSSDFGSWDKCKFYVNKYLVNNICAFDPTAKHVEVNVQLIDEYIRDHSRTEVWKFGNVVIEHLYHWIHICSALMKITKQLNSGITPPLPSKTDNYMYAKMPGEGLQEK.

Positions 1–23 (MNESASQEELRPAQENRKEDKER) are disordered. The segment covering 8–23 (EELRPAQENRKEDKER) has biased composition (basic and acidic residues). Phosphoserine is present on S77. Disordered regions lie at residues 477 to 518 (ASKT…EQGP), 544 to 656 (IEPG…QGPY), and 730 to 750 (FPETTKKEVQKDKPCEPKSQK). Polar residues predominate over residues 549–561 (HTESTLEQGSSRR). 2 stretches are compositionally biased toward basic and acidic residues: residues 562–582 (LLTEQETHRESTTEQGQHKGS) and 607–622 (GSRRESIAEQDRHKGS). In terms of domain architecture, EF-hand spans 869-904 (RQRLLLEAIFQKWDSDGSGFLDLKEVDELLYTYKEG). 4 residues coordinate Ca(2+): D882, D884, S886, and E893.

In Homo sapiens (Human), this protein is EF-hand calcium-binding domain-containing protein 5 (EFCAB5).